Reading from the N-terminus, the 421-residue chain is Glutamyl-tRNA reductase (421 aa).

Substrate-binding positions include 49-52 (TCNR), serine 109, 114-116 (EPQ), and glutamine 120. The active-site Nucleophile is the cysteine 50. 189 to 194 (GAGKMS) contributes to the NADP(+) binding site.

This sequence belongs to the glutamyl-tRNA reductase family. As to quaternary structure, homodimer.

It carries out the reaction (S)-4-amino-5-oxopentanoate + tRNA(Glu) + NADP(+) = L-glutamyl-tRNA(Glu) + NADPH + H(+). The protein operates within porphyrin-containing compound metabolism; protoporphyrin-IX biosynthesis; 5-aminolevulinate from L-glutamyl-tRNA(Glu): step 1/2. Catalyzes the NADPH-dependent reduction of glutamyl-tRNA(Glu) to glutamate 1-semialdehyde (GSA). The chain is Glutamyl-tRNA reductase from Solibacter usitatus (strain Ellin6076).